Reading from the N-terminus, the 326-residue chain is Lipid droplet-associated hydrolase (326 aa).

Serine 140 functions as the Nucleophile in the catalytic mechanism. Active-site charge relay system residues include aspartate 272 and histidine 301.

It belongs to the AB hydrolase superfamily. LDAH family. Expressed in liver, adrenal gland, prostate, spleen, kidney, brown and white adipose tissue, testis and to a lesser extent in brain (at protein level). Expressed in peritoneal macrophages and bone marrow-derived macrophages (at protein level). Highly expressed in macrophage and foam cell-rich areas in atherosclerotic lesions (at protein level). mRNA, but no protein, expressed in heart and muscle.

The protein resides in the lipid droplet. It localises to the endoplasmic reticulum. The enzyme catalyses a cholesterol ester + H2O = cholesterol + a fatty acid + H(+). Its function is as follows. Probable serine lipid hydrolase associated with lipid droplets. Has low cholesterol esterase activity. Appears to lack triglyceride lipase activity. Involved in cholesterol and triglyceride homeostasis; stimulates cellular triglyceride accumulation and cellular cholesterol release. Acts antagonistically with PNPLA2/ATGL in regulation of cellular lipid stores. May regulate triglyceride accumulation indirectly through stimulation of PNPLA2/ATGL ubiquitination and proteasomal degradation. Promotes microtubule-dependent lipid droplet fusion. Highly expressed in macrophage-rich areas in atherosclerotic lesions, suggesting that it could promote cholesterol ester turnover in macrophages. Functionally, stimulates cellular triglyceride accumulation and lipid droplet fusion. Associates with lipid droplets but does not stimulate cellular triglyceride accumulation, lipid droplet fusion or ATGL proteasomal degradation. This is Lipid droplet-associated hydrolase from Mus musculus (Mouse).